The sequence spans 325 residues: uncharacterized protein (325 aa).

Positions 37 to 85 are disordered; sequence EKPTYTPAKPVKKAPSVVQPRRVSRTLRSSESVHTNHGPERVFESPTPA. S52 bears the Phosphoserine mark. Over residues 62–71 the composition is skewed to polar residues; it reads TLRSSESVHT. The FCP1 homology domain maps to 153 to 311; it reads EDEGKKCLIL…IDLIPFLEHL (159 aa).

This is an uncharacterized protein from Schizosaccharomyces pombe (strain 972 / ATCC 24843) (Fission yeast).